The following is a 96-amino-acid chain: Large ribosomal subunit protein uL23 (96 aa).

This sequence belongs to the universal ribosomal protein uL23 family. In terms of assembly, part of the 50S ribosomal subunit. Contacts protein L29, and trigger factor when it is bound to the ribosome.

One of the early assembly proteins it binds 23S rRNA. One of the proteins that surrounds the polypeptide exit tunnel on the outside of the ribosome. Forms the main docking site for trigger factor binding to the ribosome. This is Large ribosomal subunit protein uL23 from Alkaliphilus oremlandii (strain OhILAs) (Clostridium oremlandii (strain OhILAs)).